The following is a 906-amino-acid chain: Cadherin-2 (906 aa).

The N-terminal stretch at 1–25 is a signal peptide; it reads MCRIAGGPRTLLPLLAALLQASLEA. The propeptide occupies 26 to 159; the sequence is SGELALCKTG…HSGALQRQKR (134 aa). A Phosphoserine modification is found at S96. 5 Cadherin domains span residues 160–267, 268–382, 383–497, 498–603, and 604–717; these read DWVI…RPEF, LHQV…PPEF, TAMT…NPYF, APNP…DNAP, and QVLP…RIVG. The Extracellular segment spans residues 160-724; it reads DWVIPPINLP…IVGAGLGTGT (565 aa). E170 contributes to the Ca(2+) binding site. An N-linked (GlcNAc...) asparagine glycan is attached at N190. Ca(2+) is bound by residues D226, E228, D259, M260, N261, D262, and N263. N273 is a glycosylation site (N-linked (GlcNAc...) asparagine). Positions 293, 295, and 301 each coordinate Ca(2+). Residue N325 is glycosylated (N-linked (GlcNAc...) asparagine). D353 lines the Ca(2+) pocket. N-linked (GlcNAc...) asparagine glycans are attached at residues N402, N572, N622, N651, and N692. Residues 725-745 form a helical membrane-spanning segment; it reads IIAILLCIIILLILVLMFVVW. Over 746–906 the chain is Cytoplasmic; the sequence is MKRRDKERQA…LADMYGGGDD (161 aa). The span at 863–880 shows a compositional bias: low complexity; it reads SGSTAGSLSSLNSSSSGG. A disordered region spans residues 863 to 883; the sequence is SGSTAGSLSSLNSSSSGGDQD.

As to quaternary structure, homodimer (via extracellular region). Can also form heterodimers with other cadherins (via extracellular region). Dimerization occurs in trans, i.e. with a cadherin chain from another cell. Interacts with PCDH8; this complex may also include TAOK2. The interaction with PCDH8 may lead to internalization through TAOK2/p38 MAPK pathway. Identified in a complex containing FGFR4, NCAM1, CDH2, PLCG1, FRS2, SRC, SHC1, GAP43 and CTTN. May interact with OBSCN (via protein kinase domain 2). Interacts with FBXO45. Cleaved by MMP24. Ectodomain cleavage leads to the generation of a soluble 90 kDa N-terminal soluble fragment and a 45 kDa membrane-bound C-terminal fragment 1 (CTF1), which is further cleaved by gamma-secretase into a 35 kDa. Cleavage in neural stem cells by MMP24 affects CDH2-mediated anchorage of neural stem cells to ependymocytes in the adult subependymal zone, leading to modulate neural stem cell quiescence. Post-translationally, may be phosphorylated by OBSCN. As to expression, in testis, expressed in Sertoli and germ cells.

The protein resides in the cell membrane. It localises to the sarcolemma. It is found in the cell junction. The protein localises to the cell surface. Its subcellular location is the desmosome. The protein resides in the adherens junction. In terms of biological role, calcium-dependent cell adhesion protein; preferentially mediates homotypic cell-cell adhesion by dimerization with a CDH2 chain from another cell. Cadherins may thus contribute to the sorting of heterogeneous cell types. Acts as a regulator of neural stem cells quiescence by mediating anchorage of neural stem cells to ependymocytes in the adult subependymal zone: upon cleavage by MMP24, CDH2-mediated anchorage is affected, leading to modulate neural stem cell quiescence. Plays a role in cell-to-cell junction formation between pancreatic beta cells and neural crest stem (NCS) cells, promoting the formation of processes by NCS cells. Required for proper neurite branching. Required for pre- and postsynaptic organization. CDH2 may be involved in neuronal recognition mechanism. In hippocampal neurons, may regulate dendritic spine density. In Rattus norvegicus (Rat), this protein is Cadherin-2 (Cdh2).